The primary structure comprises 405 residues: Arginine biosynthesis bifunctional protein ArgJ (405 aa).

The span at 1–18 (MTSADKNNPDTSTAQGSS) shows a compositional bias: polar residues. The interval 1–21 (MTSADKNNPDTSTAQGSSADL) is disordered. Positions 167, 189, 200, 281, 400, and 405 each coordinate substrate. The active-site Nucleophile is Thr200.

This sequence belongs to the ArgJ family. Heterotetramer of two alpha and two beta chains.

The protein resides in the cytoplasm. The catalysed reaction is N(2)-acetyl-L-ornithine + L-glutamate = N-acetyl-L-glutamate + L-ornithine. The enzyme catalyses L-glutamate + acetyl-CoA = N-acetyl-L-glutamate + CoA + H(+). It participates in amino-acid biosynthesis; L-arginine biosynthesis; L-ornithine and N-acetyl-L-glutamate from L-glutamate and N(2)-acetyl-L-ornithine (cyclic): step 1/1. It functions in the pathway amino-acid biosynthesis; L-arginine biosynthesis; N(2)-acetyl-L-ornithine from L-glutamate: step 1/4. Its function is as follows. Catalyzes two activities which are involved in the cyclic version of arginine biosynthesis: the synthesis of N-acetylglutamate from glutamate and acetyl-CoA as the acetyl donor, and of ornithine by transacetylation between N(2)-acetylornithine and glutamate. In Corynebacterium jeikeium (strain K411), this protein is Arginine biosynthesis bifunctional protein ArgJ.